We begin with the raw amino-acid sequence, 222 residues long: Flagellar L-ring protein (222 aa).

Residues 1–18 (MRRPGAAALAAAALALAG) form the signal peptide. A lipid anchor (N-palmitoyl cysteine) is attached at C19. Residue C19 is the site of S-diacylglycerol cysteine attachment.

The protein belongs to the FlgH family. In terms of assembly, the basal body constitutes a major portion of the flagellar organelle and consists of four rings (L,P,S, and M) mounted on a central rod.

The protein localises to the cell outer membrane. Its subcellular location is the bacterial flagellum basal body. Its function is as follows. Assembles around the rod to form the L-ring and probably protects the motor/basal body from shearing forces during rotation. This chain is Flagellar L-ring protein, found in Burkholderia mallei (strain ATCC 23344).